The chain runs to 860 residues: MQEQYRPEDIETQVQLHWQEKQTFKVTEDASKEKYYCLSMLPYPSGRLHMGHVRNYTIGDVISRYQRMLGKNVLQPIGWDAFGLPAEGAAVKNNTAPAPWTYDNIEYMKNQLKLLGFGYDWDREIATCKPDYYRWEQWFFTKLYEKGMVYKKTSAVNWCPHDLTVLANEQVIDGCCWRCDTKVERKEIPQWFIKITDYAEQLLNDLDTLESWPEQVKTMQRNWIGRSEGVDIVFDVVDSEEKLSVYTTRPDTFMGVTYVAVAAGHPLSLQAAATNPALADFVAECRNTKVAEAEMATMEKKGMATGLYAIHPLTGEKLPIWAANFVLMDYGTGAVMAVPGHDARDWEFATKYNLPIKPVILAADGSEPDLSQEAMTEKGTLFNSGEFDGLNHEDGFNAIADKLVALGVGQRKVNYRLRDWGVSRQRYWGAPIPMVTLEDGTVVPTPEDQLPVILPEDVVMDGISSPIKADPEWAKTTVNGIPGLRETDTFDTFMESSWYYARYTCPQYDDGMLDPAAANYWLPVDQYVGGIEHAIMHLMYFRFFHKLLRDAGLVDSDEPAKRLLCQGMVLADAFYYTGNNGERIWVSPVDAIVERDDKGRIVKAVDAEGHELVYAGMSKMSKSKNNGIDPQVMVEKYGADTVRLFMMFASPAEMTLEWQESGVEGANRFLKRVWRLAFDHTAKGAVKPLDIASLTEEQKSLRRDLHKTIAKVTDDVGRRQTFNTAIAAVMELMNKLGRAPQETEQDRALMQEALLAVVRMLYPFTPHVCFSLWQALGGEGDIDTAPWPIADEQAMVEDSKLVVVQVNGKVRGRITVPADATEQQVRERAGQEHLVAKYLDGITVRKVIYVPGKLLNLVVG.

A 'HIGH' region motif is present at residues P42 to H52. The 'KMSKS' region signature appears at K619–S623. An ATP-binding site is contributed by K622.

This sequence belongs to the class-I aminoacyl-tRNA synthetase family.

The protein localises to the cytoplasm. The enzyme catalyses tRNA(Leu) + L-leucine + ATP = L-leucyl-tRNA(Leu) + AMP + diphosphate. This chain is Leucine--tRNA ligase, found in Yersinia pestis bv. Antiqua (strain Angola).